Consider the following 248-residue polypeptide: Proteasome subunit alpha (248 aa).

Ser2 carries the post-translational modification N-acetylserine; partial.

It belongs to the peptidase T1A family. As to quaternary structure, the 20S proteasome core is composed of 14 alpha and 14 beta subunits that assemble into four stacked heptameric rings, resulting in a barrel-shaped structure. The two inner rings, each composed of seven catalytic beta subunits, are sandwiched by two outer rings, each composed of seven alpha subunits. The catalytic chamber with the active sites is on the inside of the barrel. Has a gated structure, the ends of the cylinder being occluded by the N-termini of the alpha-subunits. Is capped by the proteasome-associated ATPase, ARC.

It is found in the cytoplasm. Its pathway is protein degradation; proteasomal Pup-dependent pathway. With respect to regulation, the formation of the proteasomal ATPase ARC-20S proteasome complex, likely via the docking of the C-termini of ARC into the intersubunit pockets in the alpha-rings, may trigger opening of the gate for substrate entry. Interconversion between the open-gate and close-gate conformations leads to a dynamic regulation of the 20S proteasome proteolysis activity. Functionally, component of the proteasome core, a large protease complex with broad specificity involved in protein degradation. The polypeptide is Proteasome subunit alpha (Mycobacterium tuberculosis (strain CDC 1551 / Oshkosh)).